The chain runs to 89 residues: Envelope protein US9 (89 aa).

A compositionally biased stretch (basic and acidic residues) spans 1-10 (MTSRPADQDS). The segment at 1–21 (MTSRPADQDSVRSSASVPLYP) is disordered. The Intravirion segment spans residues 1–66 (MTSRPADQDS…RRRRTRCVGL (66 aa)). The Internalization motif signature appears at 20 to 23 (YPAA). Residues 29-38 (EAYYSESEDE) are acidic. Phosphoserine; by host CK2 is present on residues Ser-33 and Ser-35. The helical; Signal-anchor for type II membrane protein transmembrane segment at 67 to 87 (VIACLVVALLSGGFGALLVWL) threads the bilayer. Topologically, residues 88 to 89 (LR) are virion surface.

It belongs to the alphaherpesvirinae envelope protein US9 family. Post-translationally, phosphorylated on serines within the acidic cluster, possibly by host CK2. Phosphorylation determines whether endocytosed viral US9 traffics to the trans-Golgi network or recycles to the cell membrane.

It localises to the virion membrane. Its subcellular location is the host Golgi apparatus membrane. The protein resides in the host smooth endoplasmic reticulum membrane. The protein localises to the host cell membrane. Essential for the anterograde spread of the infection throughout the host nervous system. Together with the gE/gI heterodimer, US9 is involved in the sorting and transport of viral structural components toward axon tips. This Homo sapiens (Human) protein is Envelope protein US9.